The following is a 273-amino-acid chain: Large ribosomal subunit protein uL2 (273 aa).

Disordered regions lie at residues Lys28–His53 and Arg221–Lys273. Residues Lys39 to Arg48 show a composition bias toward low complexity.

It belongs to the universal ribosomal protein uL2 family. Part of the 50S ribosomal subunit. Forms a bridge to the 30S subunit in the 70S ribosome.

Its function is as follows. One of the primary rRNA binding proteins. Required for association of the 30S and 50S subunits to form the 70S ribosome, for tRNA binding and peptide bond formation. It has been suggested to have peptidyltransferase activity; this is somewhat controversial. Makes several contacts with the 16S rRNA in the 70S ribosome. This chain is Large ribosomal subunit protein uL2, found in Pectobacterium atrosepticum (strain SCRI 1043 / ATCC BAA-672) (Erwinia carotovora subsp. atroseptica).